The primary structure comprises 207 residues: Ribonuclease HII (207 aa).

Residues threonine 18–serine 207 form the RNase H type-2 domain. Residues aspartate 24, glutamate 25, and aspartate 116 each coordinate a divalent metal cation.

Belongs to the RNase HII family. The cofactor is Mn(2+). It depends on Mg(2+) as a cofactor.

The protein resides in the cytoplasm. The enzyme catalyses Endonucleolytic cleavage to 5'-phosphomonoester.. In terms of biological role, endonuclease that specifically degrades the RNA of RNA-DNA hybrids. This is Ribonuclease HII from Mycoplasma capricolum subsp. capricolum (strain California kid / ATCC 27343 / NCTC 10154).